We begin with the raw amino-acid sequence, 476 residues long: Growth arrest-specific protein 7 (476 aa).

Residues 1 to 62 (MSGARCRTLY…PASYVQLLEK (62 aa)) enclose the SH3 domain. In terms of domain architecture, WW spans 77-110 (VILPPGWQSYLSPQGRRYYVNTTTNETTWERPSS). The segment at 100–171 (TNETTWERPS…SSPSKKQSKE (72 aa)) is disordered. The segment covering 108–120 (PSSSPGIPASPGS) has biased composition (low complexity). Residues S117 and S163 each carry the phosphoserine modification. Positions 150 to 171 (RKSTGDSQNLGSSSPSKKQSKE) are enriched in polar residues. In terms of domain architecture, F-BAR spans 196–456 (TEWSYCDYFW…LLRKVDPAKD (261 aa)). Positions 309 to 419 (ENFKKDMKKC…RLEVERVEMI (111 aa)) form a coiled coil.

The protein resides in the cytoplasm. Functionally, may play a role in promoting maturation and morphological differentiation of cerebellar neurons. This chain is Growth arrest-specific protein 7 (GAS7), found in Homo sapiens (Human).